The sequence spans 671 residues: Probable potassium transport system protein Kup 2 (671 aa).

Helical transmembrane passes span 12-32 (FAGL…SPLY), 56-76 (ISLI…MIAL), 99-119 (WLVI…TLTP), 139-159 (IPVP…VILF), 172-192 (AFGP…IANL), 218-238 (VGIL…ALYS), 251-271 (SWPY…AWIL), 296-316 (LFAI…LITG), 345-365 (IYIP…VFLF), 374-394 (AYGL…FEYL), 400-420 (PLYL…MFLI), and 429-449 (GGYV…VWFY).

The protein belongs to the HAK/KUP transporter (TC 2.A.72) family.

The protein resides in the cell membrane. It carries out the reaction K(+)(in) + H(+)(in) = K(+)(out) + H(+)(out). Its function is as follows. Transport of potassium into the cell. Likely operates as a K(+):H(+) symporter. This is Probable potassium transport system protein Kup 2 from Lactobacillus acidophilus (strain ATCC 700396 / NCK56 / N2 / NCFM).